The primary structure comprises 57 residues: COP9 signalosome complex subunit 9 (57 aa).

The protein belongs to the CSN9 family. As to quaternary structure, component of the CSN complex, probably composed of cops1, cops2, cops3, cops4, cops5, cops6, cops7, cops8 and cops9.

It localises to the nucleus. The protein localises to the cytoplasm. Its subcellular location is the nucleoplasm. In terms of biological role, component of the COP9 signalosome complex (CSN), a complex involved in various cellular and developmental processes. The CSN complex is an essential regulator of the ubiquitin (Ubl) conjugation pathway by mediating the deneddylation of the cullin subunits of SCF-type E3 ligase complexes, leading to decrease the Ubl ligase activity. May play a role in cell proliferation. The polypeptide is COP9 signalosome complex subunit 9 (Danio rerio (Zebrafish)).